Consider the following 801-residue polypeptide: Phenylalanine--tRNA ligase beta subunit (801 aa).

The tRNA-binding domain occupies 39–148 (AGSFTGVKVG…EDAVIGTDFR (110 aa)). Residues 401–476 (PKPNKVALRR…RIYGYDNIPN (76 aa)) form the B5 domain. Positions 454, 460, 463, and 464 each coordinate Mg(2+). The FDX-ACB domain maps to 707 to 800 (SKFPSNRRDI…VSEKFGAALR (94 aa)).

It belongs to the phenylalanyl-tRNA synthetase beta subunit family. Type 1 subfamily. Tetramer of two alpha and two beta subunits. Mg(2+) is required as a cofactor.

The protein resides in the cytoplasm. It carries out the reaction tRNA(Phe) + L-phenylalanine + ATP = L-phenylalanyl-tRNA(Phe) + AMP + diphosphate + H(+). This Vibrio parahaemolyticus serotype O3:K6 (strain RIMD 2210633) protein is Phenylalanine--tRNA ligase beta subunit.